We begin with the raw amino-acid sequence, 488 residues long: Calcium/calmodulin-dependent protein kinase type II subunit delta (488 aa).

A2 carries the N-acetylalanine modification. In terms of domain architecture, Protein kinase spans 14-272 (YQLFEELGKG…ASEALKHPWI (259 aa)). ATP contacts are provided by residues 20–28 (LGKGAFSVV) and K43. The active-site Proton acceptor is the D136. Residues 283–292 (HRQETVDCLK) form an autoinhibitory domain region. Residue T287 is modified to Phosphothreonine; by autocatalysis. Residues 291 to 301 (LKKFNARRKLK) are calmodulin-binding. T306 and T307 each carry phosphothreonine; by autocatalysis. S315 carries the post-translational modification Phosphoserine. K317 bears the N6-acetyllysine mark. S318 and S340 each carry phosphoserine. The interval 325 to 350 (GVKKRKSSSSVQMMESTESSNTTIED) is disordered. Residues 332 to 347 (SSSVQMMESTESSNTT) show a composition bias toward polar residues. A Phosphothreonine modification is found at T341. A Phosphoserine modification is found at S343. A phosphothreonine mark is found at T346 and T347. At S414 the chain carries Phosphoserine.

The protein belongs to the protein kinase superfamily. CAMK Ser/Thr protein kinase family. CaMK subfamily. CAMK2 is composed of 4 different chains: alpha (CAMK2A), beta (CAMK2B), gamma (CAMK2G), and delta (CAMK2D). The different isoforms assemble into homo- or heteromultimeric holoenzymes composed of 12 subunits with two hexameric rings stacked one on top of the other. Interacts with RRAD and CACNB2. In terms of processing, autophosphorylation of Thr-287 following activation by Ca(2+)/calmodulin. Phosphorylation of Thr-287 locks the kinase into an activated state.

It localises to the cell membrane. It is found in the sarcolemma. The protein localises to the sarcoplasmic reticulum membrane. It catalyses the reaction L-seryl-[protein] + ATP = O-phospho-L-seryl-[protein] + ADP + H(+). The enzyme catalyses L-threonyl-[protein] + ATP = O-phospho-L-threonyl-[protein] + ADP + H(+). Its activity is regulated as follows. Activated by Ca(2+)/calmodulin. Binding of calmodulin results in conformational change that relieves intrasteric autoinhibition and allows autophosphorylation of Thr-287 which turns the kinase in a constitutively active form and confers to the kinase a Ca(2+)-independent activity. In terms of biological role, calcium/calmodulin-dependent protein kinase involved in the regulation of Ca(2+) homeostatis and excitation-contraction coupling (ECC) in heart by targeting ion channels, transporters and accessory proteins involved in Ca(2+) influx into the myocyte, Ca(2+) release from the sarcoplasmic reticulum (SR), SR Ca(2+) uptake and Na(+) and K(+) channel transport. Targets also transcription factors and signaling molecules to regulate heart function. In its activated form, is involved in the pathogenesis of dilated cardiomyopathy and heart failure. Contributes to cardiac decompensation and heart failure by regulating SR Ca(2+) release via direct phosphorylation of RYR2 Ca(2+) channel on 'Ser-2808'. In the nucleus, phosphorylates the MEF2 repressor HDAC4, promoting its nuclear export and binding to 14-3-3 protein, and expression of MEF2 and genes involved in the hypertrophic program. Is essential for left ventricular remodeling responses to myocardial infarction. In pathological myocardial remodeling acts downstream of the beta adrenergic receptor signaling cascade to regulate key proteins involved in ECC. Regulates Ca(2+) influx to myocytes by binding and phosphorylating the L-type Ca(2+) channel subunit beta-2 CACNB2. In addition to Ca(2+) channels, can target and regulate the cardiac sarcolemmal Na(+) channel Nav1.5/SCN5A and the K+ channel Kv4.3/KCND3, which contribute to arrhythmogenesis in heart failure. Phosphorylates phospholamban (PLN/PLB), an endogenous inhibitor of SERCA2A/ATP2A2, contributing to the enhancement of SR Ca(2+) uptake that may be important in frequency-dependent acceleration of relaxation (FDAR) and maintenance of contractile function during acidosis. May participate in the modulation of skeletal muscle function in response to exercise, by regulating SR Ca(2+) transport through phosphorylation of PLN/PLB and triadin, a ryanodine receptor-coupling factor. In response to interferon-gamma (IFN-gamma) stimulation, catalyzes phosphorylation of STAT1, stimulating the JAK-STAT signaling pathway. The protein is Calcium/calmodulin-dependent protein kinase type II subunit delta (CAMK2D) of Bos taurus (Bovine).